The chain runs to 266 residues: MRLIPLKTAAQVGKWAAAHIAKRINDFQPTAERPFVLGLPTGGTPLATYKALIELYQEGKVSFKHVVTFNMDEYVGISADHPESYRSFMYNNFFNHIDIQEENINLLNGNAEDHEAECQRYEDKIKSYGRINLFMGGVGNDGHIAFNEPASSLSSRTRIKTLTEDTRIANSRFFDGDINQVPKYALTIGVGTLLDSQEIMILVTGHNKALALEAAVEGSVNHLWTVSALQLHPKSVIVCDEPSTQELKVKTVKYFTELEAKNIVGF.

Asp72 functions as the Proton acceptor; for enolization step in the catalytic mechanism. Asp141 functions as the For ring-opening step in the catalytic mechanism. The active-site Proton acceptor; for ring-opening step is His143. Glu148 functions as the For ring-opening step in the catalytic mechanism.

It belongs to the glucosamine/galactosamine-6-phosphate isomerase family. NagB subfamily. As to quaternary structure, homohexamer.

It carries out the reaction alpha-D-glucosamine 6-phosphate + H2O = beta-D-fructose 6-phosphate + NH4(+). It functions in the pathway amino-sugar metabolism; N-acetylneuraminate degradation; D-fructose 6-phosphate from N-acetylneuraminate: step 5/5. With respect to regulation, allosterically activated by N-acetylglucosamine 6-phosphate (GlcNAc6P). Functionally, catalyzes the reversible isomerization-deamination of glucosamine 6-phosphate (GlcN6P) to form fructose 6-phosphate (Fru6P) and ammonium ion. The sequence is that of Glucosamine-6-phosphate deaminase from Vibrio vulnificus (strain CMCP6).